The primary structure comprises 114 residues: Fluoride-specific ion channel FluC 2 (114 aa).

4 helical membrane-spanning segments follow: residues 3–23 (YVIIGGAVGACLRFAVSECWL), 31–51 (LMTAVFVINISGCAMLGWILA), 57–77 (GIELLFISMLGGFTTFSTFCM), and 92–112 (MIYLVISIVGSLFGFLFGWNV). Residues glycine 67 and threonine 70 each contribute to the Na(+) site.

This sequence belongs to the fluoride channel Fluc/FEX (TC 1.A.43) family.

It localises to the cell membrane. The enzyme catalyses fluoride(in) = fluoride(out). Na(+) is not transported, but it plays an essential structural role and its presence is essential for fluoride channel function. Its function is as follows. Fluoride-specific ion channel. Important for reducing fluoride concentration in the cell, thus reducing its toxicity. This chain is Fluoride-specific ion channel FluC 2, found in Shouchella clausii (strain KSM-K16) (Alkalihalobacillus clausii).